A 65-amino-acid polypeptide reads, in one-letter code: pH-response transcription factor pacC/RIM101 (65 aa).

A C2H2-type 1 zinc finger spans residues 16-40 (LTCQWNSCRTTTVKRDHITSHIRVH). The segment at 46–65 (HKCEFCGKSFKRPQDLKKHV) adopts a C2H2-type 2; degenerate zinc-finger fold.

It belongs to the pacC/RIM101 family.

It is found in the nucleus. In terms of biological role, transcription factor that mediates regulation of both acid- and alkaline-expressed genes in response to ambient pH. At alkaline ambient pH, activates transcription of alkaline-expressed genes (including pac1 itself) and represses transcription of acid-expressed genes. The sequence is that of pH-response transcription factor pacC/RIM101 (pac1) from Colletotrichum gloeosporioides (Anthracnose fungus).